Here is an 83-residue protein sequence, read N- to C-terminus: Short neurotoxin D (83 aa).

The first 21 residues, 1 to 21, serve as a signal peptide directing secretion; sequence MKTLLLTLVVVTMVCLDLGYT. 4 disulfide bridges follow: C24–C45, C38–C62, C64–C75, and C76–C81.

It belongs to the three-finger toxin family. Short-chain subfamily. Type I alpha-neurotoxin sub-subfamily. In terms of tissue distribution, expressed by the venom gland.

Its subcellular location is the secreted. Functionally, binds to muscle nicotinic acetylcholine receptor (nAChR) and inhibit acetylcholine from binding to the receptor, thereby impairing neuromuscular transmission. The chain is Short neurotoxin D from Laticauda colubrina (Yellow-lipped sea krait).